Consider the following 357-residue polypeptide: MAASMAHYQGHLSNRITTGRAETVGQAQYPPRRAERKYKLEVEQQPIRARMCGFGDKDRRPITPPPCIRLVVLDEMDRELDFNEIDSTYFVLMVDLWNESGQSAVNLVRHSSAAPTVSISSSTTTSYPPPPERSHYVATTIPGYDAHSQAYRHQQHQHQHQHQHMQPQPMAAAGYGPGAHTGVAVPPYYPPTPQPPTPTYQQYPAPAPAAPYGQAPAPSAMIPATPMSSNHTRNLIGMNAVNACRLNDTKNKPGFWFVLQDLSVRTEGTFRLKLFLFDIGAGDGTNATVAADGPTRGKGKCLAVNFSDPFTVYSAKKFPGVIESTPLSKCFAQQGIKIPIRKDGPKLPNQAEYDADD.

The region spanning 32-341 (RRAERKYKLE…AQQGIKIPIR (310 aa)) is the Velvet domain.

This sequence belongs to the velvet family. VelB subfamily. Component of the heterotrimeric velvet complex composed of LAE1, VEL1 and VEL2; VEL1A acting as a bridging protein between LAE1 and VEL2. Forms a heterodimeric complex with VOS1; the formation of the VEL2-VOS1 complex is light-dependent.

Its subcellular location is the nucleus. The protein resides in the cytoplasm. In terms of biological role, component of the velvet transcription factor complex that controls sexual/asexual developmental ratio in response to light, promoting sexual development in the darkness while stimulating asexual sporulation under illumination. The velvet complex acts as a global regulator for secondary metabolite gene expression. Component of the VEL2-VOS1 heterodimeric complex that plays a dual role in activating genes associated with spore maturation and repressing certain development-associated genes. The complex binds DNA through the DNA-binding domain of VOS1 that recognizes an 11-nucleotide consensus sequence 5'-CTGGCCGCGGC-3' consisting of two motifs in the promoters of key developmental regulatory genes. The VEL2-VOS1 complex is required for normal pseudothecium development and regulates asexual spore compartmentalization, pigmentation and germination. The protein is Velvet complex subunit 2 of Cochliobolus heterostrophus (strain C5 / ATCC 48332 / race O) (Southern corn leaf blight fungus).